Reading from the N-terminus, the 622-residue chain is Prothrombin (622 aa).

The N-terminal stretch at 1 to 24 (MAHVRGLQLPGCLALAALCSLVHS) is a signal peptide. Positions 25-43 (QHVFLAPQQARSLLQRVRR) are excised as a propeptide. The region spanning 44–89 (ANTFLEEVRKGNLERECVEETCSYEEAFEALESSTATDVFWAKYTA) is the Gla domain. A 4-carboxyglutamate mark is found at Glu-49, Glu-50, Glu-57, Glu-59, Glu-62, Glu-63, Glu-68, Glu-69, Glu-72, and Glu-75. A disulfide bond links Cys-60 and Cys-65. Intrachain disulfides connect Cys-90–Cys-103, Cys-108–Cys-186, Cys-129–Cys-169, Cys-157–Cys-181, Cys-213–Cys-291, Cys-234–Cys-274, Cys-262–Cys-286, Cys-336–Cys-482, Cys-391–Cys-407, Cys-536–Cys-550, and Cys-564–Cys-594. 2 consecutive Kringle domains span residues 108–186 (CAEG…IPVC) and 213–291 (CVPD…LNYC). N-linked (GlcNAc...) (complex) asparagine glycosylation is found at Asn-121 and Asn-143. One can recognise a Peptidase S1 domain in the interval 364 to 618 (IVEGSDAEIG…LKKWIQKVID (255 aa)). His-406 acts as the Charge relay system in catalysis. A glycan (N-linked (GlcNAc...) (complex) asparagine) is linked at Asn-416. The active-site Charge relay system is Asp-462. The tract at residues 551-573 (AGYKPDEGKRGDACEGDSGGPFV) is high affinity receptor-binding region which is also known as the TP508 peptide. Ser-568 functions as the Charge relay system in the catalytic mechanism.

This sequence belongs to the peptidase S1 family. Heterodimer (named alpha-thrombin) of a light and a heavy chain; disulfide-linked. Forms a heterodimer with SERPINA5. In plasma, interacts (via N-terminus) with alpha-1-microglobulin with molar ratio 1:2 and 1:1; this interaction does not prevent the activation of prothrombin to thrombin. Interacts (thrombin) with iripin-8, a serine protease inhibitor from Ixodes ricinus saliva. Interacts (thrombin) with iripin-3, a serine protease inhibitor from Ixodes ricinus saliva. Interacts (thrombin) with Anopheles albimanus salivary thrombin inhibitor anophelin; the interaction results in thrombin inhibition. Interacts (thrombin) with Anopheles gambiae salivary thrombin inhibitor anophelin; the interaction results in thrombin inhibition. Interacts (thrombin) with Amblyomma variegatum variegin; the interaction results in thrombin inhibition. Interacts (thrombin) with Xenopsylla cheopis salivary thrombin inhibitor XC-42. Interacts (thrombin) with Xenopsylla cheopis salivary thrombin inhibitor XC-43. In terms of processing, the gamma-carboxyglutamyl residues, which bind calcium ions, result from the carboxylation of glutamyl residues by a microsomal enzyme, the vitamin K-dependent carboxylase. The modified residues are necessary for the calcium-dependent interaction with a negatively charged phospholipid surface, which is essential for the conversion of prothrombin to thrombin. N-glycosylated. N-glycan heterogeneity at Asn-121: Hex3HexNAc3 (minor), Hex4HexNAc3 (minor) and Hex5HexNAc4 (major). At Asn-143: Hex4HexNAc3 (minor) and Hex5HexNAc4 (major). Post-translationally, in the penultimate step of the coagulation cascade, prothrombin is converted to thrombin by the prothrombinase complex composed of factor Xa (F10), cofactor Va (F5), and phospholipids. This activation requires factor Xa-catalyzed sequential cleavage at 2 sites, Arg-314 and Arg-363, along 2 possible pathways. In the first pathway, the first cleavage occurs at Arg-314, leading to the formation of the inactive intermediate prethrombin-2. This pathway preferentially occurs on platelets and in the absence of cofactor Va. In the second pathway, the first cleavage occurs at Arg-363, which separates protease domain into 2 chains that remain connected through a disulfide bond and generates the active intermediate meizothrombin. The presence of cofactor Va directs activation along the meizothrombin pathway and greatly accelerates the rate of cleavage at Arg-363, but has a smaller effect on the cleavage of meizothrombin at Arg-314. Meizothrombin accumulates as an intermediate when prothrombinase is assembled on the membrane of red blood cells. As to expression, expressed by the liver and secreted in plasma.

The protein resides in the secreted. It is found in the extracellular space. It catalyses the reaction Selective cleavage of Arg-|-Gly bonds in fibrinogen to form fibrin and release fibrinopeptides A and B.. With respect to regulation, activity is promoted in the presence of negatively charged surfaces, such as polyphosphate and dextran sulfate. Inhibited by SERPINA5. In terms of biological role, thrombin, which cleaves bonds after Arg and Lys, converts fibrinogen to fibrin and activates factors V, VII, VIII, XIII, and, in complex with thrombomodulin, protein C. Functions in blood homeostasis, inflammation and wound healing. Activates coagulation factor XI (F11); activation is promoted by the contact with negatively charged surfaces. Triggers the production of pro-inflammatory cytokines, such as MCP-1/CCL2 and IL8/CXCL8, in endothelial cells. In Homo sapiens (Human), this protein is Prothrombin (F2).